The following is a 329-amino-acid chain: Malate dehydrogenase (329 aa).

13–19 (GAAGNIS) contacts NAD(+). Substrate-binding residues include Arg-94 and Arg-100. NAD(+) contacts are provided by residues Asn-107, Gln-114, and 131–133 (VGN). Positions 133 and 164 each coordinate substrate. His-189 functions as the Proton acceptor in the catalytic mechanism.

It belongs to the LDH/MDH superfamily. MDH type 2 family.

It catalyses the reaction (S)-malate + NAD(+) = oxaloacetate + NADH + H(+). Functionally, catalyzes the reversible oxidation of malate to oxaloacetate. In Psychrobacter cryohalolentis (strain ATCC BAA-1226 / DSM 17306 / VKM B-2378 / K5), this protein is Malate dehydrogenase.